The sequence spans 202 residues: Holliday junction branch migration complex subunit RuvA (202 aa).

The tract at residues 1–64 is domain I; it reads MIDFLKGRLV…ETALEMFGFS (64 aa). The domain II stretch occupies residues 65–143; it reads SELDRTAFLL…KQQVAVSAEL (79 aa). Residues 144 to 152 are flexible linker; the sequence is PASDGVPVL. Positions 152–202 are domain III; it reads LAGRAENEALAALISLGYTPREAREALNRLPDRKLDAAGLVHAALRIMGSQ.

It belongs to the RuvA family. Homotetramer. Forms an RuvA(8)-RuvB(12)-Holliday junction (HJ) complex. HJ DNA is sandwiched between 2 RuvA tetramers; dsDNA enters through RuvA and exits via RuvB. An RuvB hexamer assembles on each DNA strand where it exits the tetramer. Each RuvB hexamer is contacted by two RuvA subunits (via domain III) on 2 adjacent RuvB subunits; this complex drives branch migration. In the full resolvosome a probable DNA-RuvA(4)-RuvB(12)-RuvC(2) complex forms which resolves the HJ.

Its subcellular location is the cytoplasm. Functionally, the RuvA-RuvB-RuvC complex processes Holliday junction (HJ) DNA during genetic recombination and DNA repair, while the RuvA-RuvB complex plays an important role in the rescue of blocked DNA replication forks via replication fork reversal (RFR). RuvA specifically binds to HJ cruciform DNA, conferring on it an open structure. The RuvB hexamer acts as an ATP-dependent pump, pulling dsDNA into and through the RuvAB complex. HJ branch migration allows RuvC to scan DNA until it finds its consensus sequence, where it cleaves and resolves the cruciform DNA. The protein is Holliday junction branch migration complex subunit RuvA of Desulforudis audaxviator (strain MP104C).